The sequence spans 135 residues: Race-specific elicitor A4 (135 aa).

The N-terminal stretch at 1 to 18 (MHYTTLLLSTLLVGTALA) is a signal peptide. A propeptide spanning residues 19–29 (QPTNPPAKTPK) is cleaved from the precursor. Positions 19-39 (QPTNPPAKTPKKAPKTQPYNP) are disordered. In terms of domain architecture, Chitin-binding type-2 spans 47–111 (DTKCMGPKDC…DYPNLSTCPV (65 aa)). An intrachain disulfide couples cysteine 86 to cysteine 101. A disordered region spans residues 112–135 (KTPQPKPKKGGVGGKKASVGHPGY).

In terms of biological role, this necrosis-inducing peptide induces a hypersensitive response on Cf-4 tomato genotypes. Race-specific elicitors are compounds which only induce defense responses in genotypes of host plants which are resistant to the pathogenic race that produces the elicitor, but not in susceptible genotypes. The protein is Race-specific elicitor A4 (AVR4) of Passalora fulva (Tomato leaf mold).